We begin with the raw amino-acid sequence, 241 residues long: Proteasome subunit alpha type-5 (241 aa).

M1 carries the post-translational modification N-acetylmethionine. Position 16 is a phosphoserine (S16). Phosphothreonine is present on T55. A phosphoserine mark is found at S56 and S63. O-linked (GlcNAc) serine glycosylation is present at S198.

Belongs to the peptidase T1A family. The 26S proteasome consists of a 20S proteasome core and two 19S regulatory subunits. The 20S proteasome core is a barrel-shaped complex made of 28 subunits that are arranged in four stacked rings. The two outer rings are each formed by seven alpha subunits, and the two inner rings are formed by seven beta subunits. The proteolytic activity is exerted by three beta-subunits PSMB5, PSMB6 and PSMB7. PSMA5 interacts directly with the PSMG1-PSMG2 heterodimer which promotes 20S proteasome assembly.

The protein localises to the cytoplasm. It localises to the nucleus. Its function is as follows. Component of the 20S core proteasome complex involved in the proteolytic degradation of most intracellular proteins. This complex plays numerous essential roles within the cell by associating with different regulatory particles. Associated with two 19S regulatory particles, forms the 26S proteasome and thus participates in the ATP-dependent degradation of ubiquitinated proteins. The 26S proteasome plays a key role in the maintenance of protein homeostasis by removing misfolded or damaged proteins that could impair cellular functions, and by removing proteins whose functions are no longer required. Associated with the PA200 or PA28, the 20S proteasome mediates ubiquitin-independent protein degradation. This type of proteolysis is required in several pathways including spermatogenesis (20S-PA200 complex) or generation of a subset of MHC class I-presented antigenic peptides (20S-PA28 complex). The chain is Proteasome subunit alpha type-5 (PSMA5) from Bos taurus (Bovine).